Here is a 734-residue protein sequence, read N- to C-terminus: Cytoplasmic polyadenylation element-binding protein 3 (734 aa).

Disordered stretches follow at residues 1 to 31 (MDRNDDSAPVQAAAEPAEHPGDEKSGKRNVP), 98 to 185 (GSKK…AARN), and 220 to 283 (RGSL…LPPR). A compositionally biased stretch (basic and acidic residues) spans 16–26 (PAEHPGDEKSG). Low complexity-rich tracts occupy residues 121–140 (SRRTTPTASASTAKTTSPSR) and 232–242 (KSFSSTTTSSS). Residues 243–256 (PEKEREKEKEKIEQ) are compositionally biased toward basic and acidic residues. Polar residues predominate over residues 259 to 275 (YGTTQRQSVNSQQSSAS). Positions 294–316 (IFVGGVPWDITEAALKDSFGEFG) constitute an RRM domain. 2 disordered regions span residues 564–593 (KAYQGHASRHSHLSSNSPSKARDGQNSNNS) and 630–657 (TVYDGPLTPPSSETMSKRGSREFSSNSN). The span at 576-593 (LSSNSPSKARDGQNSNNS) shows a compositional bias: low complexity.

In terms of biological role, cytoplasmic polyadenylation element binding protein that binds to and regulates the translation of specific mRNAs. This is Cytoplasmic polyadenylation element-binding protein 3 (cpb-3) from Caenorhabditis japonica.